The chain runs to 546 residues: Probable protein kinase UbiB (546 aa).

The 379-residue stretch at 124–502 (DFEIKPLASA…HVRQGQSRYF (379 aa)) folds into the Protein kinase domain. Residues 130-138 (LASASIAQV) and Lys-153 contribute to the ATP site. The Proton acceptor role is filled by Asp-288. 2 helical membrane passes run 501 to 521 (YFLG…VSRP) and 522 to 542 (EWGL…FVGW).

Belongs to the ABC1 family. UbiB subfamily.

It is found in the cell inner membrane. It participates in cofactor biosynthesis; ubiquinone biosynthesis [regulation]. Its function is as follows. Is probably a protein kinase regulator of UbiI activity which is involved in aerobic coenzyme Q (ubiquinone) biosynthesis. This chain is Probable protein kinase UbiB, found in Escherichia coli O45:K1 (strain S88 / ExPEC).